Here is a 314-residue protein sequence, read N- to C-terminus: MPERVVIALGGNALQQRGQKGTYDEMMENVRKTAKQIAEIIARGYEVVITHGNGPQVGTILLHMDAGQSLHGIPAQPMDVAGAMSQGWIGYMIQQALRNELRKRGIEKEVVTIITQTIVDKKDPAFQNPTKPVGPFYDEKTAKKLAKEKGWVVKEDAGRGWRRVVPSPDPKGHVEAETIRRLVESGIIVIASGGGGVPVIEENGEIKGVEAVIDKDLAGEKLAEEVNADILMILTDVNGAALYYGTEKETWLRNVKVEELEKYYQEGHFKAGSMGPKVLAAIRFIKNGGKRAIIAHLEKAVEALEGKTGTQVTP.

The protein belongs to the carbamate kinase family. Homodimer.

The protein resides in the cytoplasm. The catalysed reaction is hydrogencarbonate + NH4(+) + ATP = carbamoyl phosphate + ADP + H2O + H(+). The sequence is that of Carbamate kinase (cpkA) from Pyrococcus horikoshii (strain ATCC 700860 / DSM 12428 / JCM 9974 / NBRC 100139 / OT-3).